Reading from the N-terminus, the 279-residue chain is DegV domain-containing protein M6_Spy1246 (279 aa).

Positions 4-278 (IKIVTDSSIT…EGAFAVMVRY (275 aa)) constitute a DegV domain. Hexadecanoate is bound by residues Thr62 and Ser95.

Functionally, may bind long-chain fatty acids, such as palmitate, and may play a role in lipid transport or fatty acid metabolism. This Streptococcus pyogenes serotype M6 (strain ATCC BAA-946 / MGAS10394) protein is DegV domain-containing protein M6_Spy1246.